The chain runs to 308 residues: Glutaminase (308 aa).

The substrate site is built by S66, N117, E161, N168, Y192, Y244, and V262.

The protein belongs to the glutaminase family. As to quaternary structure, homotetramer.

It carries out the reaction L-glutamine + H2O = L-glutamate + NH4(+). In Salmonella arizonae (strain ATCC BAA-731 / CDC346-86 / RSK2980), this protein is Glutaminase.